Here is a 260-residue protein sequence, read N- to C-terminus: Trans-aconitate 2-methyltransferase (260 aa).

Belongs to the methyltransferase superfamily. Tam family.

The protein resides in the cytoplasm. It catalyses the reaction trans-aconitate + S-adenosyl-L-methionine = (E)-3-(methoxycarbonyl)pent-2-enedioate + S-adenosyl-L-homocysteine. Its function is as follows. Catalyzes the S-adenosylmethionine monomethyl esterification of trans-aconitate. The protein is Trans-aconitate 2-methyltransferase of Paracidovorax citrulli (strain AAC00-1) (Acidovorax citrulli).